Consider the following 89-residue polypeptide: uncharacterized protein (89 aa).

This is an uncharacterized protein from Escherichia coli (Bacteriophage T4).